Consider the following 96-residue polypeptide: MLRLDLQFFASKKGVGSTKNGRDSIAKRLGAKRADGQFVTSGSILYRQRGTKVHPGLNVGRGGDDTLYAKIDGIVRFERLGRDRKRVSVYPVSQEA.

A propeptide spanning residues 1–9 (MLRLDLQFF) is cleaved from the precursor.

It belongs to the bacterial ribosomal protein bL27 family. In terms of processing, the N-terminus is cleaved by ribosomal processing cysteine protease Prp.

The protein is Large ribosomal subunit protein bL27 of Geobacillus kaustophilus (strain HTA426).